The primary structure comprises 213 residues: Probable nicotinate-nucleotide adenylyltransferase (213 aa).

Belongs to the NadD family.

It carries out the reaction nicotinate beta-D-ribonucleotide + ATP + H(+) = deamido-NAD(+) + diphosphate. It participates in cofactor biosynthesis; NAD(+) biosynthesis; deamido-NAD(+) from nicotinate D-ribonucleotide: step 1/1. Functionally, catalyzes the reversible adenylation of nicotinate mononucleotide (NaMN) to nicotinic acid adenine dinucleotide (NaAD). The polypeptide is Probable nicotinate-nucleotide adenylyltransferase (Trichlorobacter lovleyi (strain ATCC BAA-1151 / DSM 17278 / SZ) (Geobacter lovleyi)).